A 60-amino-acid chain; its full sequence is Small, acid-soluble spore protein C2 (60 aa).

The protein belongs to the alpha/beta-type SASP family. SASP are degraded in the first minutes of spore germination and provide amino acids for both new protein synthesis and metabolism.

In terms of biological role, SASP are bound to spore DNA. They are double-stranded DNA-binding proteins that cause DNA to change to an a-like conformation. They protect the DNA backbone from chemical and enzymatic cleavage and are thus involved in dormant spore's high resistance to UV light. The chain is Small, acid-soluble spore protein C2 (sspC2) from Clostridium perfringens (strain 13 / Type A).